The chain runs to 1088 residues: Sterol regulatory element-binding protein 2 (1088 aa).

The transcriptional activation (acidic) stretch occupies residues 1–38; that stretch reads METLTELGDELTLGDIDEMLQFVSNQVGEFPDLFEEQL. Topologically, residues 1–440 are cytoplasmic; the sequence is METLTELGDE…TGLGMMDRSR (440 aa). Residues 59–70 show a composition bias toward polar residues; it reads AAQQPYTTSAPQ. The tract at residues 59-87 is disordered; sequence AAQQPYTTSAPQPQLLPVKAPPQATPQRT. The region spanning 290 to 340 is the bHLH domain; the sequence is ERRTTHNIIEKRYRSSINDKIMELKDLVMGTDAKMHKSGVLKKAIDYIKYL. Residues 340 to 361 form a leucine-zipper region; sequence LQQVNQKLRQENMALKLANQKN. The disordered stretch occupies residues 392 to 431; it reads SPPASDSGSPAVFSPYSVDSEPGSPLLDDEKVKDEPDSPT. A helical transmembrane segment spans residues 441 to 461; the sequence is MLLCTMTFLCLSFNPLTSLLH. The Lumenal portion of the chain corresponds to 462-494; the sequence is PESGQYSERAVQHGTGRTMLGVEMSGFYGSWFD. The helical transmembrane segment at 495–515 threads the bilayer; sequence WLIPTIILWLVNGVIVLSVFM. Over 516-1088 the chain is Cytoplasmic; it reads KLLIHGEPVT…LSGGTAMAAS (573 aa).

Belongs to the SREBP family. In terms of assembly, forms a tight complex with scap, the SCAP-SREBP complex, in the endoplasmic reticulum membrane. As to quaternary structure, homodimer; efficient DNA binding of the soluble transcription factor fragment requires dimerization with another bHLH protein. Post-translationally, processed in the Golgi apparatus, releasing the protein from the membrane. At low cholesterol the SCAP-SREBP complex is recruited into COPII vesicles for export from the endoplasmic reticulum. In the Golgi, complex SREBPs are cleaved sequentially by site-1 (MBTPS1, S1P) and site-2 (MBTPS2, S2P) proteases. The first cleavage by site-1 protease occurs within the luminal loop, the second cleavage by site-2 protease occurs within the first transmembrane domain, releasing the transcription factor from the Golgi membrane.

Its subcellular location is the endoplasmic reticulum membrane. The protein resides in the golgi apparatus membrane. It is found in the cytoplasmic vesicle. It localises to the COPII-coated vesicle membrane. The protein localises to the nucleus. Precursor of the transcription factor form (Processed sterol regulatory element-binding protein 2), which is embedded in the endoplasmic reticulum membrane. Low sterol concentrations promote processing of this form, releasing the transcription factor form that translocates into the nucleus and activates transcription of genes involved in cholesterol biosynthesis. In terms of biological role, key transcription factor that regulates expression of genes involved in cholesterol biosynthesis. Binds to the sterol regulatory element 1 (SRE-1) (5'-ATCACCCCAC-3'). Has dual sequence specificity binding to both an E-box motif (5'-ATCACGTGA-3') and to SRE-1 (5'-ATCACCCCAC-3'). Regulates transcription of genes related to cholesterol synthesis pathway. The sequence is that of Sterol regulatory element-binding protein 2 from Xenopus laevis (African clawed frog).